A 742-amino-acid chain; its full sequence is Alginate lyase (742 aa).

Residues 1 to 26 form the signal peptide; the sequence is MRLQPLFVSLALAAPCALLPTASLSA. Residues R143, 153 to 156, Q204, H208, and 263 to 266 contribute to the substrate site; these read QVLN and YYQR. Catalysis depends on Y264, which acts as the Proton donor. The active-site Proton acceptor is H418. Zn(2+) contacts are provided by H420 and D438. R443 provides a ligand contact to substrate. H469 provides a ligand contact to Zn(2+). E669 is a binding site for substrate.

This sequence belongs to the polysaccharide lyase 17 family. Homodimer. Zn(2+) is required as a cofactor.

The protein localises to the periplasm. It carries out the reaction Cleavage of 4-deoxy-alpha-L-erythro-hex-4-enopyranuronoside oligosaccharides into 4-deoxy-alpha-L-erythro-hex-4-enopyranuronate monosaccharides.. Its function is as follows. Polysaccharide lyase that catalyzes the depolymerization of alginate via a beta-elimination mechanism, cleaving the beta-1,4 glycosidic bond between two adjacent sugar residues. Acts specifically on alginate and each of its block structures, with highest activity toward poly-beta-D-mannuronate (poly-ManA). Shows an exolytic mode of action, producing unsaturated monomers. Displays a very low activity against poly-beta-D-glucuronate (poly-GlcA), and is not active on poly-alpha-D-galacturonate, hyaluronan, heparin, heparan sulfate and chondroitin sulfate. The protein is Alginate lyase of Stenotrophomonas maltophilia (strain K279a).